An 80-amino-acid polypeptide reads, in one-letter code: Large ribosomal subunit protein bL31B (80 aa).

Belongs to the bacterial ribosomal protein bL31 family. Type B subfamily. In terms of assembly, part of the 50S ribosomal subunit.

This is Large ribosomal subunit protein bL31B from Streptococcus sanguinis (strain SK36).